Consider the following 197-residue polypeptide: MSKLVLATGNQGKVKEMASLLADFGFDVVAQSDFNVSSVAETGTTFIENAIIKARHAAKETGLPAIADDSGLEVDFLQGAPGIYSARFAGEDATDQQNLEKLLADMEGVPAEQRTARFHCVLVMMRHENDPTPLVCHGSWEGSILTQAQGENGFGYDPVFWVPEDQCASAQLESPRKKELSHRGKALQKLFAALKDA.

Position 8–13 (8–13) interacts with substrate; sequence TGNQGK. The active-site Proton acceptor is Asp-69. Asp-69 is a Mg(2+) binding site. Substrate contacts are provided by residues Ser-70, 154 to 157, Lys-177, and 182 to 183; these read FGYD and HR.

Belongs to the HAM1 NTPase family. As to quaternary structure, homodimer. Requires Mg(2+) as cofactor.

It carries out the reaction XTP + H2O = XMP + diphosphate + H(+). The enzyme catalyses dITP + H2O = dIMP + diphosphate + H(+). It catalyses the reaction ITP + H2O = IMP + diphosphate + H(+). Its function is as follows. Pyrophosphatase that catalyzes the hydrolysis of nucleoside triphosphates to their monophosphate derivatives, with a high preference for the non-canonical purine nucleotides XTP (xanthosine triphosphate), dITP (deoxyinosine triphosphate) and ITP. Seems to function as a house-cleaning enzyme that removes non-canonical purine nucleotides from the nucleotide pool, thus preventing their incorporation into DNA/RNA and avoiding chromosomal lesions. This chain is dITP/XTP pyrophosphatase, found in Photobacterium profundum (strain SS9).